Consider the following 103-residue polypeptide: MQKIKSNDEIIIIAGKDKGSIGIVTKIVDSKVLVEGLNLAKKHVKPNPNKGVTGGITEIEMPLSISNVAIYNPTTKKADRVGIRTSKNGIKERFFKSNDKSII.

Belongs to the universal ribosomal protein uL24 family. As to quaternary structure, part of the 50S ribosomal subunit.

One of two assembly initiator proteins, it binds directly to the 5'-end of the 23S rRNA, where it nucleates assembly of the 50S subunit. Its function is as follows. One of the proteins that surrounds the polypeptide exit tunnel on the outside of the subunit. This Vesicomyosocius okutanii subsp. Calyptogena okutanii (strain HA) protein is Large ribosomal subunit protein uL24.